The following is a 126-amino-acid chain: Muscarinic acetylcholine receptor M4 (126 aa).

A disordered region spans residues Met-1 to Ser-90. Over Met-1–Val-126 the chain is Cytoplasmic. The segment covering Ala-28–Pro-39 has biased composition (pro residues). Polar residues predominate over residues Asn-47 to Asn-57. Residues Thr-64–Ala-75 show a composition bias toward low complexity.

Belongs to the G-protein coupled receptor 1 family. Muscarinic acetylcholine receptor subfamily. CHRM4 sub-subfamily.

The protein localises to the cell membrane. It is found in the postsynaptic cell membrane. Functionally, the muscarinic acetylcholine receptor mediates various cellular responses, including inhibition of adenylate cyclase, breakdown of phosphoinositides and modulation of potassium channels through the action of G proteins. Primary transducing effect is inhibition of adenylate cyclase. May couple to multiple functional responses in cell lines. This is Muscarinic acetylcholine receptor M4 (CHRM4) from Bos taurus (Bovine).